We begin with the raw amino-acid sequence, 502 residues long: Glycerol kinase (502 aa).

An ADP-binding site is contributed by Thr14. Thr14, Thr15, and Ser16 together coordinate ATP. Thr14 provides a ligand contact to sn-glycerol 3-phosphate. ADP is bound at residue Arg18. Residues Arg84, Glu85, and Tyr136 each contribute to the sn-glycerol 3-phosphate site. Glycerol contacts are provided by Arg84, Glu85, and Tyr136. His232 is modified (phosphohistidine; by HPr). Residue Asp246 coordinates sn-glycerol 3-phosphate. Glycerol contacts are provided by Asp246 and Gln247. ADP contacts are provided by Thr268 and Gly311. Positions 268, 311, 315, and 412 each coordinate ATP. Positions 412 and 416 each coordinate ADP.

Belongs to the FGGY kinase family. Homotetramer and homodimer (in equilibrium). Post-translationally, the phosphoenolpyruvate-dependent sugar phosphotransferase system (PTS), including enzyme I, and histidine-containing protein (HPr) are required for the phosphorylation, which leads to the activation of the enzyme.

The catalysed reaction is glycerol + ATP = sn-glycerol 3-phosphate + ADP + H(+). Its pathway is polyol metabolism; glycerol degradation via glycerol kinase pathway; sn-glycerol 3-phosphate from glycerol: step 1/1. With respect to regulation, activated by phosphorylation and inhibited by fructose 1,6-bisphosphate (FBP). In terms of biological role, key enzyme in the regulation of glycerol uptake and metabolism. Catalyzes the phosphorylation of glycerol to yield sn-glycerol 3-phosphate. The sequence is that of Glycerol kinase from Streptococcus sanguinis (strain SK36).